A 443-amino-acid polypeptide reads, in one-letter code: Packaging protein 1 (443 aa).

Residues 1–75 (MSGAADGTVP…PEAAQPPPSR (75 aa)) are disordered. Residues 13-56 (EDTHQEDSGERECEQRPVHSGREATGESDPALERPDHGERHGPE) are compositionally biased toward basic and acidic residues. 169–176 (GPTGSGKS) is a binding site for ATP. The segment at 433-443 (VSYANKRKWYD) is DNA-binding.

Belongs to the adenoviridae packaging protein 1 family. Homodimer. Part of a genome packaging complex composed of packaging proteins 1, 2 and 3; this complex specifically binds to the packaging sequence on the left end of viral genomic DNA and performs packaging of the viral genome. Interacts with protein 33K.

It is found in the virion. The protein resides in the host nucleus. Its subcellular location is the host nucleoplasm. It localises to the host nucleolus. Functionally, component of the packaging machinery which encapsidates the viral DNA into preformed capsids and transcriptional activator of the viral major late promoter (MLP). Binds, along with packaging proteins 2 and 3, to the specific packaging sequence on the left end of viral genomic DNA and displays ATPase activity thereby providing the power stroke of the packaging machinery. The activity of packaging protein IVa2 is stimulated by protein 33K which acts as a terminase. May be the protein that pumps DNA into the capsid powered by ATP hydrolysis. Specifically binds to the 5'-CG-3' nucleotides of the repeats making up the packaging sequence. Component of the DEF-A and DEF-B transcription factors that bind downstream elements of the major late promoter (MLP), and stimulate transcription from the MLP after initiation of viral DNA replication. DEF-A is a heterodimer packaging proteins 1 and 2 and DEF-B is a homodimer of packaging protein 1. The sequence is that of Packaging protein 1 from Pantherophis guttatus (Corn snake).